The primary structure comprises 968 residues: Isoleucine--tRNA ligase (968 aa).

The short motif at 68 to 78 is the 'HIGH' region element; that stretch reads PYANGALHMGH. An L-isoleucyl-5'-AMP-binding site is contributed by Glu-584. The 'KMSKS' region signature appears at 625 to 629; sequence KMSKS. Lys-628 contributes to the ATP binding site. Cys-938, Cys-941, Cys-958, and Cys-961 together coordinate Zn(2+).

This sequence belongs to the class-I aminoacyl-tRNA synthetase family. IleS type 1 subfamily. In terms of assembly, monomer. Requires Zn(2+) as cofactor.

It localises to the cytoplasm. The catalysed reaction is tRNA(Ile) + L-isoleucine + ATP = L-isoleucyl-tRNA(Ile) + AMP + diphosphate. Its function is as follows. Catalyzes the attachment of isoleucine to tRNA(Ile). As IleRS can inadvertently accommodate and process structurally similar amino acids such as valine, to avoid such errors it has two additional distinct tRNA(Ile)-dependent editing activities. One activity is designated as 'pretransfer' editing and involves the hydrolysis of activated Val-AMP. The other activity is designated 'posttransfer' editing and involves deacylation of mischarged Val-tRNA(Ile). The chain is Isoleucine--tRNA ligase from Synechococcus sp. (strain CC9311).